Reading from the N-terminus, the 296-residue chain is MDIRQFRHFAAVAETLHFGRAAERLGITQPPLSQSIQALEKALGAPLFARTKRHVELTALGRQWLPHVLEALAAVDALPDTARRLRDGQTGYLSLSFVSTADYSVLPDLVRRYAEAFPGVEIQLVEATSDVQVPAIQAGERHAGIIIPPPNRSLPAALAYRRLVSEPLVAVTPEAWGAEGPLDLAALADVPLVLFPRTVAPAFHDLVTGYVAARGQPVRIVQEAIQMQTIISLVSAGLGMALAPASLRKLARVGVRYVDLVDPPILETGLVWRRDEAAPTLQGLLRLVTEDGSAPD.

Positions 1 to 58 (MDIRQFRHFAAVAETLHFGRAAERLGITQPPLSQSIQALEKALGAPLFARTKRHVELT) constitute an HTH lysR-type domain. Positions 18–37 (FGRAAERLGITQPPLSQSIQ) form a DNA-binding region, H-T-H motif.

Belongs to the LysR transcriptional regulatory family.

Its function is as follows. Positively regulates the expression of the ilvD gene while negatively autoregulating its own expression. This chain is HTH-type transcriptional regulator IlvR (ilvR), found in Caulobacter vibrioides (strain ATCC 19089 / CIP 103742 / CB 15) (Caulobacter crescentus).